Reading from the N-terminus, the 610-residue chain is C4b-binding protein alpha chain (610 aa).

The N-terminal stretch at 1–48 (MKHQRVPVMILHSKGTMASWPFSRLWSISDPILFQVTLVATLLATVLG) is a signal peptide. 8 consecutive Sushi domains span residues 49–109 (SCGI…FCVK), 110–171 (KRCE…QCII), 172–236 (AKCE…SCKK), 237–296 (VICV…TCEL), 297–364 (NGCL…ECKE), 365–427 (VCCP…ECRP), 428–485 (DCKS…QCKA), and 486–543 (LCLK…KCEW). Intrachain disulfides connect Cys-50/Cys-95, Cys-80/Cys-107, Cys-112/Cys-153, Cys-139/Cys-169, Cys-174/Cys-217, Cys-203/Cys-234, Cys-239/Cys-281, Cys-267/Cys-294, Cys-299/Cys-350, Cys-334/Cys-362, Cys-367/Cys-412, Cys-402/Cys-425, Cys-429/Cys-471, Cys-457/Cys-483, Cys-487/Cys-528, and Cys-514/Cys-541. Asn-66 carries N-linked (GlcNAc...) asparagine glycosylation. N-linked (GlcNAc...) asparagine glycosylation is present at Asn-221. 2 N-linked (GlcNAc...) asparagine glycosylation sites follow: Asn-525 and Asn-602.

Disulfide-linked complex of alpha and beta chains.

The protein localises to the secreted. Functionally, controls the classical pathway of complement activation. It binds as a cofactor to C3b/C4b inactivator (C3bINA), which then hydrolyzes the complement fragment C4b. It also accelerates the degradation of the C4bC2a complex (C3 convertase) by dissociating the complement fragment C2a. Alpha chain binds C4b. It also interacts with serum amyloid P component. This Bos taurus (Bovine) protein is C4b-binding protein alpha chain (C4BPA).